A 472-amino-acid polypeptide reads, in one-letter code: Phosphoenolpyruvate carboxykinase (ATP), glycosomal (472 aa).

An ATP-binding site is contributed by 221–228 (GLSGTGKT).

It belongs to the phosphoenolpyruvate carboxykinase (ATP) family. In terms of assembly, homodimer.

The protein localises to the glycosome. The enzyme catalyses oxaloacetate + ATP = phosphoenolpyruvate + ADP + CO2. The protein operates within carbohydrate biosynthesis; gluconeogenesis. Its function is as follows. P60 has the capability to bind to microtubules and membrane vesicles in vitro. This chain is Phosphoenolpyruvate carboxykinase (ATP), glycosomal, found in Trypanosoma brucei brucei.